The primary structure comprises 487 residues: Malonate-semialdehyde dehydrogenase 2 (487 aa).

NAD(+)-binding residues include Phe154, Lys178, Glu181, Arg182, and Ser231. The active-site Nucleophile is Cys286. Glu386 is an NAD(+) binding site.

It belongs to the aldehyde dehydrogenase family. IolA subfamily. In terms of assembly, homotetramer.

The enzyme catalyses 3-oxopropanoate + NAD(+) + CoA + H2O = hydrogencarbonate + acetyl-CoA + NADH + H(+). The catalysed reaction is 2-methyl-3-oxopropanoate + NAD(+) + CoA + H2O = propanoyl-CoA + hydrogencarbonate + NADH + H(+). It participates in polyol metabolism; myo-inositol degradation into acetyl-CoA; acetyl-CoA from myo-inositol: step 7/7. In terms of biological role, catalyzes the oxidation of malonate semialdehyde (MSA) and methylmalonate semialdehyde (MMSA) into acetyl-CoA and propanoyl-CoA, respectively. Is involved in a myo-inositol catabolic pathway. Bicarbonate, and not CO2, is the end-product of the enzymatic reaction. The polypeptide is Malonate-semialdehyde dehydrogenase 2 (Bacillus thuringiensis (strain Al Hakam)).